Consider the following 957-residue polypeptide: SLIT and NTRK-like protein 5 (957 aa).

Positions 1–40 (MHVCCPPVTLEQDLHRKMHSWMLQTLAFAVTSLVLSCAET) are cleaved as a signal peptide. Residues 41 to 664 (IDYYGEICDN…GTGASSVPLS (624 aa)) are Extracellular-facing. LRR repeat units follow at residues 82-103 (PIYH…EFVN), 106-127 (GASI…AFHG), 130-151 (GLRR…TFLG), 154-175 (NLEY…AFGK), 178-199 (MLQV…LFRF), and 201-222 (PLTH…GLLQ). A glycan (N-linked (GlcNAc...) asparagine) is linked at asparagine 103. Positions 235–286 (NPWNCSCELISLKDWLDSISYSALVGDVVCETPFRLHGRDLDEVSKQELCPR) constitute an LRRCT 1 domain. The segment at 317–358 (ATSSSAVYKPPLKPPKGTRQPNKPRVRPTSRQPSKDLGYSNY) is disordered. The region spanning 365-407 (QTKSPVPLECPTACTCNLQISDLGLNVNCQERKIESIAELQPK) is the LRRNT domain. LRR repeat units lie at residues 410–431 (NPKK…DFLE), 434–455 (GLDL…AFGD), 458–479 (NLRR…LFYG), 482–503 (SLQY…TFDP), 506–527 (NLQL…VFSG), and 529–550 (TLLR…GVLD). Residues 563–614 (NPWDCTCDVVGMKLWIEQLKVGVLVDEVICKAPKKFAETYMRSIKSELLCPD) form the LRRCT 2 domain. Low complexity predominate over residues 623–632 (PTPSSIQVPS). The tract at residues 623 to 642 (PTPSSIQVPSRTNAATPAVR) is disordered. Asparagine 644 carries an N-linked (GlcNAc...) asparagine glycan. The chain crosses the membrane as a helical span at residues 665-685 (VLILSLLLVFIMSVFVAAGLF). Topologically, residues 686 to 957 (VLVMKRRKKN…LEKQTTFSQF (272 aa)) are cytoplasmic. Residues 789 to 844 (SNHHLQQQPPPPPQQPQQQPPPQMQMQPGEEERRESHHLRSPAYSVSTIEPREDLL) are disordered. A compositionally biased stretch (pro residues) spans 796 to 811 (QPPPPPQQPQQQPPPQ).

This sequence belongs to the SLITRK family. As to expression, in the adult, significant expression is detected only in the brain. In the embryo, expressed in the subventricular zone, cortical plate, pyramidal layer of hippocampus, thalamus and hypothalamus.

It is found in the membrane. Functionally, suppresses neurite outgrowth. This is SLIT and NTRK-like protein 5 (Slitrk5) from Mus musculus (Mouse).